We begin with the raw amino-acid sequence, 22 residues long: Mu-conotoxin TIIIA (22 aa).

3 disulfide bridges follow: cysteine 4/cysteine 16, cysteine 5/cysteine 21, and cysteine 11/cysteine 22. Proline 8 and proline 18 each carry 4-hydroxyproline. Cysteine 22 carries the cysteine amide modification.

It belongs to the conotoxin M superfamily. Expressed by the venom duct.

The protein resides in the secreted. In terms of biological role, mu-conotoxins block voltage-gated sodium channels (Nav). This synthetic toxin reversibly and potently blocks rNav1.4/SCN4A (IC(50) is 9 nM) and rNav1.2/SCN2A (IC(50) is 40 nM). It also moderately blocks rNav1.1/SCN1A, rNav1.3/SCN3A, and rNav1.6/SCN8A. The block of SCN1A and SCN2A is modified when beta-subunits are coexpressed with alpha subunits. Hence, blocks of channels containing beta-1 and beta-3 subunits are more potent (compared to channels without beta subunits), whereas blocks of channels containing beta-2 and beta-4 subunits are less potent (compared to channels without beta subunits). This chain is Mu-conotoxin TIIIA, found in Conus tulipa (Fish-hunting cone snail).